The following is a 392-amino-acid chain: NADH dehydrogenase-like protein YjlD (392 aa).

It belongs to the NADH dehydrogenase family. FAD serves as cofactor.

The chain is NADH dehydrogenase-like protein YjlD (yjlD) from Bacillus subtilis (strain 168).